The primary structure comprises 320 residues: Aspartate carbamoyltransferase catalytic subunit (320 aa).

Arg68 and Thr69 together coordinate carbamoyl phosphate. Lys96 contacts L-aspartate. The carbamoyl phosphate site is built by Arg118, His148, and Gln151. L-aspartate is bound by residues Arg181 and Arg236. Gly277 and Pro278 together coordinate carbamoyl phosphate.

It belongs to the aspartate/ornithine carbamoyltransferase superfamily. ATCase family. In terms of assembly, heterododecamer (2C3:3R2) of six catalytic PyrB chains organized as two trimers (C3), and six regulatory PyrI chains organized as three dimers (R2).

The catalysed reaction is carbamoyl phosphate + L-aspartate = N-carbamoyl-L-aspartate + phosphate + H(+). The protein operates within pyrimidine metabolism; UMP biosynthesis via de novo pathway; (S)-dihydroorotate from bicarbonate: step 2/3. Catalyzes the condensation of carbamoyl phosphate and aspartate to form carbamoyl aspartate and inorganic phosphate, the committed step in the de novo pyrimidine nucleotide biosynthesis pathway. In Acidovorax ebreus (strain TPSY) (Diaphorobacter sp. (strain TPSY)), this protein is Aspartate carbamoyltransferase catalytic subunit.